The following is a 507-amino-acid chain: MITLTPGHLTLPQLRKIARESVQLTLDPASFAKIDAGAKAVADIAAKGEPAYGINTGFGRLASTHIPHDQLELLQKNLVLSHAVGVGEPMARSSVRLLMALKLSSLGRGHSGIRREVMDALITLFNADVLPLIPVKGSVGASGDLAPLAHMSAVLLGVGEVFIRGERASALDGLRVAGLAPLTLQAKEGLALLNGTQASTALALDNMFSIEDLYRTALVAGALSVDAAAGSVKPFDARIHELRGHRGQIDAAAAYRDLLDGSPINQSHRDCDKVQDPYSLRCQPQVMGACLDQMRHAADVLLIEANAVSDNPLIFPDTGEVLSGGNFHAEPVAFAADNLALAAAEIGALAERRIALLIDATLSGLPPFLVKDGGVNSGFMIAHVTAAALASENKTLAHPASVDSLPTSANQEDHVSMATFAARKLADIADNTKYILAIELLAAAQGVDLRAPYHTSPKLAPVMETIRGHVAHYELDHYFAPDIAVIAKLVSERAFAKVAPFSFASEQ.

The 5-imidazolinone (Ala-Gly) cross-link spans 141–143 (ASG). Serine 142 is modified (2,3-didehydroalanine (Ser)).

Belongs to the PAL/histidase family. Contains an active site 4-methylidene-imidazol-5-one (MIO), which is formed autocatalytically by cyclization and dehydration of residues Ala-Ser-Gly.

It localises to the cytoplasm. It catalyses the reaction L-histidine = trans-urocanate + NH4(+). The protein operates within amino-acid degradation; L-histidine degradation into L-glutamate; N-formimidoyl-L-glutamate from L-histidine: step 1/3. The sequence is that of Histidine ammonia-lyase from Burkholderia ambifaria (strain ATCC BAA-244 / DSM 16087 / CCUG 44356 / LMG 19182 / AMMD) (Burkholderia cepacia (strain AMMD)).